A 90-amino-acid chain; its full sequence is Small ribosomal subunit protein bS20 (90 aa).

Residues 1-11 show a composition bias toward basic and acidic residues; the sequence is MANIKSSEKDI. Positions 1 to 29 are disordered; it reads MANIKSSEKDIRRTKRRNAANSQNRSRLR.

It belongs to the bacterial ribosomal protein bS20 family.

Binds directly to 16S ribosomal RNA. This is Small ribosomal subunit protein bS20 from Leptospira borgpetersenii serovar Hardjo-bovis (strain JB197).